A 308-amino-acid chain; its full sequence is Peptidyl-prolyl cis-trans isomerase CYP8 (308 aa).

One can recognise a PPIase cyclophilin-type domain in the interval 56 to 215 (FTDPESSEEA…QPITIGYISS (160 aa)).

The catalysed reaction is [protein]-peptidylproline (omega=180) = [protein]-peptidylproline (omega=0). Its function is as follows. PPIases accelerate the folding of proteins. It catalyzes the cis-trans isomerization of proline imidic peptide bonds in oligopeptides. This chain is Peptidyl-prolyl cis-trans isomerase CYP8 (CPR8), found in Saccharomyces cerevisiae (strain ATCC 204508 / S288c) (Baker's yeast).